The primary structure comprises 156 residues: ATP synthase subunit b (156 aa).

The helical transmembrane segment at 11–31 (LIAFVVFVIFCMKYVWPPIIG) threads the bilayer.

It belongs to the ATPase B chain family. In terms of assembly, F-type ATPases have 2 components, F(1) - the catalytic core - and F(0) - the membrane proton channel. F(1) has five subunits: alpha(3), beta(3), gamma(1), delta(1), epsilon(1). F(0) has three main subunits: a(1), b(2) and c(10-14). The alpha and beta chains form an alternating ring which encloses part of the gamma chain. F(1) is attached to F(0) by a central stalk formed by the gamma and epsilon chains, while a peripheral stalk is formed by the delta and b chains.

The protein resides in the cell inner membrane. Functionally, f(1)F(0) ATP synthase produces ATP from ADP in the presence of a proton or sodium gradient. F-type ATPases consist of two structural domains, F(1) containing the extramembraneous catalytic core and F(0) containing the membrane proton channel, linked together by a central stalk and a peripheral stalk. During catalysis, ATP synthesis in the catalytic domain of F(1) is coupled via a rotary mechanism of the central stalk subunits to proton translocation. Its function is as follows. Component of the F(0) channel, it forms part of the peripheral stalk, linking F(1) to F(0). The sequence is that of ATP synthase subunit b from Colwellia psychrerythraea (strain 34H / ATCC BAA-681) (Vibrio psychroerythus).